The primary structure comprises 218 residues: uncharacterized protein (218 aa).

The next 5 membrane-spanning stretches (helical) occupy residues 28–48, 66–86, 92–112, 122–142, and 173–193; these read ILLF…LSGL, FDIG…WKPL, LGTL…TKIL, MIFC…YLTC, and ISVC…TVLF.

It is found in the cell membrane. This is an uncharacterized protein from Haemophilus influenzae (strain ATCC 51907 / DSM 11121 / KW20 / Rd).